We begin with the raw amino-acid sequence, 199 residues long: MSIYFSGLMAPLDKNNVDTDQIIPKQFLTSTSREGFDAALFYDWRYLENDEPNPDFILNRPCYQGAQILLTRDNFGCGSSREHAPWALKQYGFEVILAESFADIFFNNCGNNQMLAIALPGDTLEQLFVLSEQHDDIHIDIDLENQTLTSTKFAPISFDIRKDVKERLLSGLDFIGVTETLNPQIDAFEQQLAAERPWQ.

It belongs to the LeuD family. LeuD type 1 subfamily. In terms of assembly, heterodimer of LeuC and LeuD.

The catalysed reaction is (2R,3S)-3-isopropylmalate = (2S)-2-isopropylmalate. Its pathway is amino-acid biosynthesis; L-leucine biosynthesis; L-leucine from 3-methyl-2-oxobutanoate: step 2/4. In terms of biological role, catalyzes the isomerization between 2-isopropylmalate and 3-isopropylmalate, via the formation of 2-isopropylmaleate. The chain is 3-isopropylmalate dehydratase small subunit from Pseudoalteromonas translucida (strain TAC 125).